The sequence spans 171 residues: Large ribosomal subunit protein uL10 (171 aa).

The protein belongs to the universal ribosomal protein uL10 family. In terms of assembly, part of the ribosomal stalk of the 50S ribosomal subunit. The N-terminus interacts with L11 and the large rRNA to form the base of the stalk. The C-terminus forms an elongated spine to which L12 dimers bind in a sequential fashion forming a multimeric L10(L12)X complex.

Forms part of the ribosomal stalk, playing a central role in the interaction of the ribosome with GTP-bound translation factors. In Rhizorhabdus wittichii (strain DSM 6014 / CCUG 31198 / JCM 15750 / NBRC 105917 / EY 4224 / RW1) (Sphingomonas wittichii), this protein is Large ribosomal subunit protein uL10.